Here is a 104-residue protein sequence, read N- to C-terminus: uncharacterized protein (104 aa).

This is an uncharacterized protein from Bacillus subtilis (strain 168).